Consider the following 137-residue polypeptide: Putative pre-16S rRNA nuclease (137 aa).

This sequence belongs to the YqgF nuclease family.

It is found in the cytoplasm. Could be a nuclease involved in processing of the 5'-end of pre-16S rRNA. In Bacillus cereus (strain G9842), this protein is Putative pre-16S rRNA nuclease.